The chain runs to 83 residues: Small ribosomal subunit protein bS16 (83 aa).

Belongs to the bacterial ribosomal protein bS16 family.

This Pseudomonas aeruginosa (strain UCBPP-PA14) protein is Small ribosomal subunit protein bS16.